The sequence spans 600 residues: Adenine deaminase 2 (600 aa).

The protein belongs to the metallo-dependent hydrolases superfamily. Adenine deaminase family. Mn(2+) is required as a cofactor.

It catalyses the reaction adenine + H2O + H(+) = hypoxanthine + NH4(+). This is Adenine deaminase 2 from Bradyrhizobium sp. (strain ORS 278).